The chain runs to 396 residues: Probable tRNA sulfurtransferase (396 aa).

The 112-residue stretch at 58–169 folds into the THUMP domain; sequence NQFIEKLKMV…KKNIYVFTRS (112 aa). Residues 187–188, 212–213, arginine 269, glycine 291, and glutamine 300 contribute to the ATP site; these read LL and YF.

It belongs to the ThiI family.

The protein localises to the cytoplasm. It carries out the reaction [ThiI sulfur-carrier protein]-S-sulfanyl-L-cysteine + a uridine in tRNA + 2 reduced [2Fe-2S]-[ferredoxin] + ATP + H(+) = [ThiI sulfur-carrier protein]-L-cysteine + a 4-thiouridine in tRNA + 2 oxidized [2Fe-2S]-[ferredoxin] + AMP + diphosphate. The catalysed reaction is [ThiS sulfur-carrier protein]-C-terminal Gly-Gly-AMP + S-sulfanyl-L-cysteinyl-[cysteine desulfurase] + AH2 = [ThiS sulfur-carrier protein]-C-terminal-Gly-aminoethanethioate + L-cysteinyl-[cysteine desulfurase] + A + AMP + 2 H(+). It functions in the pathway cofactor biosynthesis; thiamine diphosphate biosynthesis. Functionally, catalyzes the ATP-dependent transfer of a sulfur to tRNA to produce 4-thiouridine in position 8 of tRNAs, which functions as a near-UV photosensor. Also catalyzes the transfer of sulfur to the sulfur carrier protein ThiS, forming ThiS-thiocarboxylate. This is a step in the synthesis of thiazole, in the thiamine biosynthesis pathway. The sulfur is donated as persulfide by IscS. The protein is Probable tRNA sulfurtransferase of Halothermothrix orenii (strain H 168 / OCM 544 / DSM 9562).